Reading from the N-terminus, the 320-residue chain is Ferrochelatase (320 aa).

Residues histidine 194 and glutamate 275 each contribute to the Fe cation site.

The protein belongs to the ferrochelatase family. As to quaternary structure, monomer.

Its subcellular location is the cytoplasm. It catalyses the reaction heme b + 2 H(+) = protoporphyrin IX + Fe(2+). It functions in the pathway porphyrin-containing compound metabolism; protoheme biosynthesis; protoheme from protoporphyrin-IX: step 1/1. Functionally, catalyzes the ferrous insertion into protoporphyrin IX. This chain is Ferrochelatase, found in Escherichia coli O8 (strain IAI1).